Here is a 729-residue protein sequence, read N- to C-terminus: Fatty acid oxidation complex subunit alpha (729 aa).

An enoyl-CoA hydratase/isomerase region spans residues Met1–Lys189. Asp296 contributes to the substrate binding site. The segment at Glu311–Ala729 is 3-hydroxyacyl-CoA dehydrogenase. NAD(+) is bound by residues Met324, Asp343, Ile400–Glu402, Lys407, and Ser429. His450 serves as the catalytic For 3-hydroxyacyl-CoA dehydrogenase activity. Asn453 provides a ligand contact to NAD(+). Residues Asn500 and Tyr660 each coordinate substrate. Positions Arg708–Ala729 are disordered.

In the N-terminal section; belongs to the enoyl-CoA hydratase/isomerase family. This sequence in the C-terminal section; belongs to the 3-hydroxyacyl-CoA dehydrogenase family. In terms of assembly, heterotetramer of two alpha chains (FadB) and two beta chains (FadA).

It catalyses the reaction a (3S)-3-hydroxyacyl-CoA + NAD(+) = a 3-oxoacyl-CoA + NADH + H(+). The catalysed reaction is a (3S)-3-hydroxyacyl-CoA = a (2E)-enoyl-CoA + H2O. The enzyme catalyses a 4-saturated-(3S)-3-hydroxyacyl-CoA = a (3E)-enoyl-CoA + H2O. It carries out the reaction (3S)-3-hydroxybutanoyl-CoA = (3R)-3-hydroxybutanoyl-CoA. It catalyses the reaction a (3Z)-enoyl-CoA = a 4-saturated (2E)-enoyl-CoA. The catalysed reaction is a (3E)-enoyl-CoA = a 4-saturated (2E)-enoyl-CoA. The protein operates within lipid metabolism; fatty acid beta-oxidation. Involved in the aerobic and anaerobic degradation of long-chain fatty acids via beta-oxidation cycle. Catalyzes the formation of 3-oxoacyl-CoA from enoyl-CoA via L-3-hydroxyacyl-CoA. It can also use D-3-hydroxyacyl-CoA and cis-3-enoyl-CoA as substrate. The protein is Fatty acid oxidation complex subunit alpha of Escherichia coli O157:H7.